The sequence spans 161 residues: MSLVTQIIVNADDELRYPTIGELQSIQDYLTTGSNRIRIATIIRDKEKEIIQKASKQIFQLHPEYIAPGGNAAGSRKRSLCLRDYGWYLRLITYGVLAGDKDSIETIGIIGVREMYNSLGVPIIGMLDAIQCLKEASLEMLGQDDIRIISPYFDYIIRGMS.

Position 71 is an N4-methylasparagine (asparagine 71). Cysteine 81 contacts (2R,3E)-phycocyanobilin.

Belongs to the phycobiliprotein family. Contains one covalently linked bilin chromophore.

It localises to the plastid. The protein resides in the chloroplast thylakoid membrane. Allophycocyanin is a photosynthetic bile pigment-protein complex with maximum absorption at approximately 650 nanometers. This chain is Allophycocyanin alpha-B chain (apcD), found in Pyropia yezoensis (Susabi-nori).